The chain runs to 121 residues: Large ribosomal subunit protein bL20 (121 aa).

This sequence belongs to the bacterial ribosomal protein bL20 family.

Functionally, binds directly to 23S ribosomal RNA and is necessary for the in vitro assembly process of the 50S ribosomal subunit. It is not involved in the protein synthesizing functions of that subunit. This Koribacter versatilis (strain Ellin345) protein is Large ribosomal subunit protein bL20.